Reading from the N-terminus, the 511-residue chain is 2,3-bisphosphoglycerate-independent phosphoglycerate mutase (511 aa).

Residues Asp-14 and Ser-64 each contribute to the Mn(2+) site. The active-site Phosphoserine intermediate is the Ser-64. Substrate-binding positions include His-125, 155-156 (RD), Arg-187, Arg-193, 259-262 (RADR), and Lys-333. The Mn(2+) site is built by Asp-400, His-404, Asp-441, His-442, and His-460.

Belongs to the BPG-independent phosphoglycerate mutase family. In terms of assembly, monomer. Mn(2+) is required as a cofactor.

It carries out the reaction (2R)-2-phosphoglycerate = (2R)-3-phosphoglycerate. The protein operates within carbohydrate degradation; glycolysis; pyruvate from D-glyceraldehyde 3-phosphate: step 3/5. Functionally, catalyzes the interconversion of 2-phosphoglycerate and 3-phosphoglycerate. This chain is 2,3-bisphosphoglycerate-independent phosphoglycerate mutase, found in Idiomarina loihiensis (strain ATCC BAA-735 / DSM 15497 / L2-TR).